A 118-amino-acid polypeptide reads, in one-letter code: uncharacterized protein (118 aa).

The next 3 membrane-spanning stretches (helical) occupy residues 20–39 (VEGP…LLWI), 46–63 (LVVV…GEAV), and 67–85 (LSLV…AMSG). The disordered stretch occupies residues 85–118 (GDKSKKKGKKQRSILKDADDWDDDSWDDEGDWDE). The span at 88 to 97 (SKKKGKKQRS) shows a compositional bias: basic residues. Positions 103 to 118 (DDWDDDSWDDEGDWDE) are enriched in acidic residues.

Its subcellular location is the cell membrane. This is an uncharacterized protein from Archaeoglobus fulgidus (strain ATCC 49558 / DSM 4304 / JCM 9628 / NBRC 100126 / VC-16).